The following is a 223-amino-acid chain: Sigma non-opioid intracellular receptor 1 (223 aa).

Topologically, residues 1–9 are lumenal; the sequence is MPWAVGRRW. Residues 2-8 form a targeting to endoplasmic reticulum-associated lipid droplets region; sequence PWAVGRR. The chain crosses the membrane as a helical span at residues 10–30; the sequence is AWITLFLTIVAVLIQAVWLWL. Over 31 to 223 the chain is Cytoplasmic; sequence GTQSFVFQRE…LTTYLFGQDP (193 aa). The tract at residues 99–106 is important for ligand-binding; it reads SLSEYVLL. The segment at 177–223 is C-terminal hydrophobic region; it reads VIPSTLAFALSDTIFSTQDFLTLFYTLRAYARGLRLELTTYLFGQDP.

This sequence belongs to the ERG2 family. In terms of assembly, homotrimer. Interacts with KCNA2; cocaine consumption leads to increased interaction. Forms a ternary complex with ANK2 and ITPR3. The complex is disrupted by agonists. Interacts with KCNA4. Interacts with RNF112 in an oxidative stress-regulated manner. Expressed in ependymocytes and neurons throughout the CNS from the olfactory bulb to the spinal cord. Expressed by progenitor, mature and satellite oligodendrocytes and by Schwann cells (at protein level). Expressed in liver, intestine, kidney, brain, lung and heart. Expressed by retinal cells.

The protein localises to the nucleus inner membrane. It localises to the nucleus outer membrane. The protein resides in the nucleus envelope. Its subcellular location is the cytoplasmic vesicle. It is found in the endoplasmic reticulum membrane. The protein localises to the membrane. It localises to the lipid droplet. The protein resides in the cell junction. Its subcellular location is the cell membrane. It is found in the cell projection. The protein localises to the growth cone. It localises to the postsynaptic density membrane. In terms of biological role, functions in lipid transport from the endoplasmic reticulum and is involved in a wide array of cellular functions probably through regulation of the biogenesis of lipid microdomains at the plasma membrane. Involved in the regulation of different receptors it plays a role in BDNF signaling and EGF signaling. Also regulates ion channels like the potassium channel and could modulate neurotransmitter release. Plays a role in calcium signaling through modulation together with ANK2 of the ITP3R-dependent calcium efflux at the endoplasmic reticulum. Plays a role in several other cell functions including proliferation, survival and death. Originally identified for its ability to bind various psychoactive drugs it is involved in learning processes, memory and mood alteration. Necessary for proper mitochondrial axonal transport in motor neurons, in particular the retrograde movement of mitochondria. Plays a role in protecting cells against oxidative stress-induced cell death via its interaction with RNF112. This Rattus norvegicus (Rat) protein is Sigma non-opioid intracellular receptor 1 (Sigmar1).